Reading from the N-terminus, the 218-residue chain is CD99 antigen-like protein 2 (218 aa).

Positions 1-25 (MVAWRSAFLVCLAFSLATLVQRGSG) are cleaved as a signal peptide. Over 26–136 (DFDDFNLKDA…PGSGMVAETG (111 aa)) the chain is Extracellular. The tract at residues 72–128 (LADALDDRNDRDDGRRKPIAGGGGFSDKDLEDIVGGGEYKPDKGKGDGRYGSNDDPG) is disordered. Basic and acidic residues-rich tracts occupy residues 76 to 87 (LDDRNDRDDGRR) and 110 to 119 (YKPDKGKGDG). Ser-129 is a glycosylation site (O-linked (Xyl...) (chondroitin sulfate) serine). A helical membrane pass occupies residues 137–157 (TIAGVASALAMALIGAVSSYI). Residues 158 to 218 (SYQQKKFCFS…EPPPSEPARI (61 aa)) lie on the Cytoplasmic side of the membrane.

This sequence belongs to the CD99 family. O-glycosylated.

It localises to the cell membrane. Its subcellular location is the cell junction. The protein localises to the secreted. Its function is as follows. Plays a role in a late step of leukocyte extravasation helping cells to overcome the endothelial basement membrane. Acts at the same site as, but independently of, PECAM1. Homophilic adhesion molecule, but these interactions may not be required for cell aggregation. In Pongo abelii (Sumatran orangutan), this protein is CD99 antigen-like protein 2 (CD99L2).